The chain runs to 261 residues: Na(+)-translocating NADH-quinone reductase subunit C (261 aa).

The chain crosses the membrane as a helical span at residues 12–32; sequence LGVVIGLSLVCSIIVSTAAVG. Position 229 is an FMN phosphoryl threonine (threonine 229).

This sequence belongs to the NqrC family. Composed of six subunits; NqrA, NqrB, NqrC, NqrD, NqrE and NqrF. FMN serves as cofactor.

It localises to the cell inner membrane. The catalysed reaction is a ubiquinone + n Na(+)(in) + NADH + H(+) = a ubiquinol + n Na(+)(out) + NAD(+). In terms of biological role, NQR complex catalyzes the reduction of ubiquinone-1 to ubiquinol by two successive reactions, coupled with the transport of Na(+) ions from the cytoplasm to the periplasm. NqrA to NqrE are probably involved in the second step, the conversion of ubisemiquinone to ubiquinol. This Vibrio parahaemolyticus serotype O3:K6 (strain RIMD 2210633) protein is Na(+)-translocating NADH-quinone reductase subunit C.